The primary structure comprises 4660 residues: Low-density lipoprotein receptor-related protein 2 (4660 aa).

An N-terminal signal peptide occupies residues 1–25 (MERGAAAAAWMLLLAIAACLAPVSG). The Extracellular portion of the chain corresponds to 26 to 4425 (QECGSGNFRC…LSRGIPPGTT (4400 aa)). LDL-receptor class A domains are found at residues 27-63 (ECGS…IGCP), 66-104 (SCGS…QNCP), 107-143 (TCSS…RNCY), 146-180 (TCDQ…ANCT), 182-218 (LCSQ…HNCN), 221-257 (TCGG…DGCE), and 264-307 (TCYP…RYCG). Cystine bridges form between Cys-28/Cys-40, Cys-35/Cys-53, Cys-47/Cys-62, Cys-67/Cys-80, Cys-74/Cys-93, Cys-87/Cys-103, Cys-108/Cys-120, Cys-115/Cys-133, Cys-127/Cys-142, Cys-147/Cys-157, Cys-152/Cys-170, Cys-164/Cys-179, Cys-183/Cys-195, Cys-190/Cys-208, Cys-202/Cys-217, Cys-222/Cys-234, Cys-229/Cys-247, Cys-241/Cys-256, Cys-265/Cys-278, Cys-272/Cys-291, and Cys-285/Cys-306. Residues Asn-159 and Asn-178 are each glycosylated (N-linked (GlcNAc...) asparagine). Residues Asn-299, Asn-340, Asn-387, and Asn-462 are each glycosylated (N-linked (GlcNAc...) asparagine). LDL-receptor class B repeat units follow at residues 435–477 (HRVF…DWIN), 478–520 (NKLY…DPTV), 521–567 (GYLF…DLVS), and 568–612 (KRVY…FEEH). Residue Asn-657 is glycosylated (N-linked (GlcNAc...) asparagine). 4 LDL-receptor class B repeats span residues 752 to 794 (STIF…DWIS), 795 to 836 (RNLY…HPAA), 837 to 880 (GYMF…DWST), and 881 to 924 (SRLY…FKDN). Asn-865 carries N-linked (GlcNAc...) asparagine glycosylation. Positions 1024 to 1060 (QCGSSSFPCNNGKCVPSIFRCDGVDDCHDNSDEHQCG) constitute an LDL-receptor class A 8 domain. Cystine bridges form between Cys-1025-Cys-1037, Cys-1032-Cys-1050, and Cys-1044-Cys-1059. N-linked (GlcNAc...) asparagine glycosylation is present at Asn-1063. LDL-receptor class A domains are found at residues 1065–1102 (TCSS…QNCP), 1109–1145 (TCPP…KNCQ), 1149–1185 (TCHP…AGCV), 1187–1224 (NCTS…AGCP), 1230–1268 (MCHP…NGCV), 1271–1307 (TCSP…KDCP), and 1312–1350 (HCPS…PLCN). 9 disulfides stabilise this stretch: Cys-1066–Cys-1079, Cys-1073–Cys-1092, Cys-1086–Cys-1101, Cys-1110–Cys-1122, Cys-1117–Cys-1135, Cys-1129–Cys-1144, Cys-1150–Cys-1162, Cys-1157–Cys-1175, and Cys-1169–Cys-1184. Ca(2+) is bound by residues Trp-1127, Asp-1130, Asp-1132, Asp-1134, Asp-1140, and Glu-1141. Asn-1187 carries N-linked (GlcNAc...) asparagine glycosylation. 18 disulfide bridges follow: Cys-1188-Cys-1201, Cys-1195-Cys-1214, Cys-1208-Cys-1223, Cys-1231-Cys-1244, Cys-1238-Cys-1257, Cys-1251-Cys-1267, Cys-1272-Cys-1284, Cys-1279-Cys-1297, Cys-1291-Cys-1306, Cys-1313-Cys-1326, Cys-1320-Cys-1339, Cys-1333-Cys-1349, Cys-1354-Cys-1365, Cys-1361-Cys-1374, Cys-1376-Cys-1389, Cys-1395-Cys-1405, Cys-1401-Cys-1414, and Cys-1416-Cys-1429. 6 residues coordinate Ca(2+): Tyr-1206, Asp-1209, Val-1211, Asp-1213, Asp-1219, and Glu-1220. Asn-1328 and Asn-1341 each carry an N-linked (GlcNAc...) asparagine glycan. The EGF-like 1 domain maps to 1350 to 1390 (NQDSCLHFNGGCTHRCIQGPFGATCVCPIGYQLANDTKTCE). Asn-1384 carries N-linked (GlcNAc...) asparagine glycosylation. The region spanning 1391–1430 (DVNECDIPGFCSQHCVNMRGSFRCACDPEYTLESDGRTCK) is the EGF-like 2; calcium-binding domain. Asn-1451, Asn-1497, and Asn-1551 each carry an N-linked (GlcNAc...) asparagine glycan. 5 LDL-receptor class B repeats span residues 1479-1521 (GRVF…DWIG), 1522-1564 (RNIY…DPRM), 1567-1610 (NVMF…DYPN), 1611-1655 (RLIY…FEDS), and 1656-1696 (VFWT…IHPS). N-linked (GlcNAc...) asparagine glycosylation is found at Asn-1676, Asn-1733, and Asn-1811. LDL-receptor class B repeat units lie at residues 1791–1833 (QFIY…DWVS), 1834–1883 (RNIY…DPAR), 1884–1931 (GKLY…DIQE), 1932–1973 (QKLY…HGSF), 1974–2014 (LYYS…YHHR), 2108–2157 (GFIY…DWVA), 2158–2202 (GNLY…DPKH), 2203–2246 (RYLF…DHDT), 2247–2290 (GYIY…FGES), and 2291–2333 (IIWV…FDEH). Asn-2131, Asn-2134, Asn-2178, and Asn-2225 each carry an N-linked (GlcNAc...) asparagine glycan. An N-linked (GlcNAc...) asparagine glycan is attached at Asn-2396. LDL-receptor class B repeat units follow at residues 2432–2478 (NRIF…DWIN), 2479–2519 (RRIY…DPCR), 2520–2563 (GYMY…DLET), 2564–2605 (DLLY…YGQY), and 2606–2647 (IYWT…VVKT). N-linked (GlcNAc...) asparagine glycans are attached at residues Asn-2488 and Asn-2548. 10 consecutive LDL-receptor class A domains span residues 2700–2738 (RCNQ…TVCA), 2741–2777 (TCRS…AGCL), 2780–2819 (SCNS…KNCP), 2822–2861 (TCQP…IYCA), 2864–2902 (TCRS…DTCG), 2907–2946 (SCSA…HHCE), 2949–2991 (NCSS…QNCT), 2994–3030 (ACST…RGCS), 3033–3071 (PCRD…HLCH), and 3076–3112 (TCPP…KGCG). Cystine bridges form between Cys-2701/Cys-2713, Cys-2708/Cys-2726, Cys-2720/Cys-2737, Cys-2742/Cys-2754, Cys-2749/Cys-2767, Cys-2761/Cys-2776, Cys-2781/Cys-2794, Cys-2789/Cys-2807, Cys-2801/Cys-2818, Cys-2823/Cys-2836, Cys-2830/Cys-2849, Cys-2843/Cys-2860, Cys-2865/Cys-2878, Cys-2872/Cys-2891, Cys-2885/Cys-2901, Cys-2908/Cys-2920, Cys-2915/Cys-2933, and Cys-2927/Cys-2945. Asn-2782 carries an N-linked (GlcNAc...) asparagine glycan. N-linked (GlcNAc...) asparagine glycosylation occurs at Asn-2810. The N-linked (GlcNAc...) asparagine glycan is linked to Asn-2949. Intrachain disulfides connect Cys-2950–Cys-2967, Cys-2957–Cys-2980, Cys-2974–Cys-2990, Cys-2995–Cys-3007, Cys-3002–Cys-3020, Cys-3014–Cys-3029, Cys-3034–Cys-3046, Cys-3041–Cys-3059, Cys-3053–Cys-3070, Cys-3077–Cys-3089, Cys-3084–Cys-3102, Cys-3096–Cys-3111, Cys-3116–Cys-3128, Cys-3124–Cys-3137, Cys-3139–Cys-3152, Cys-3158–Cys-3169, Cys-3165–Cys-3178, and Cys-3180–Cys-3193. The N-linked (GlcNAc...) asparagine glycan is linked to Asn-2989. Residues 3112-3153 (GINECQDSSISHCDHNCTDTITSFYCSCLPGYKLMSDKRTCV) form the EGF-like 3 domain. N-linked (GlcNAc...) asparagine glycosylation occurs at Asn-3127. The region spanning 3154-3194 (DIDECKETPQLCSQKCENVIGSYICKCAPGYIREPDGKSCR) is the EGF-like 4; calcium-binding domain. N-linked (GlcNAc...) asparagine glycans are attached at residues Asn-3213, Asn-3259, Asn-3317, and Asn-3357. 5 LDL-receptor class B repeats span residues 3241–3283 (ERLY…DWVS), 3284–3326 (RKLY…ENPR), 3335–3378 (GYVY…DYTN), 3379–3421 (DLLY…FEDT), and 3422–3462 (VFWT…LHPY). Residue Asn-3448 is glycosylated (N-linked (GlcNAc...) asparagine). 8 consecutive LDL-receptor class A domains span residues 3513-3551 (MCSS…DLCP), 3554-3592 (FCRL…VLCE), 3595-3633 (RCEA…SHCA), 3636-3674 (TCRP…HECM), 3679-3717 (NCDN…QGCE), 3720-3757 (PCHP…ESCV), 3760-3796 (ECTE…RDCE), and 3799-3835 (TCHP…SACP). Intrachain disulfides connect Cys-3514–Cys-3527, Cys-3521–Cys-3540, Cys-3534–Cys-3550, Cys-3555–Cys-3567, Cys-3562–Cys-3580, Cys-3574–Cys-3591, Cys-3596–Cys-3608, Cys-3603–Cys-3621, Cys-3615–Cys-3632, Cys-3637–Cys-3649, Cys-3644–Cys-3662, Cys-3656–Cys-3673, Cys-3680–Cys-3694, Cys-3688–Cys-3707, Cys-3701–Cys-3716, Cys-3721–Cys-3734, Cys-3729–Cys-3747, Cys-3741–Cys-3756, Cys-3761–Cys-3773, Cys-3768–Cys-3786, Cys-3780–Cys-3795, Cys-3800–Cys-3812, Cys-3807–Cys-3825, and Cys-3819–Cys-3834. A glycan (N-linked (GlcNAc...) asparagine) is linked at Asn-3566. An N-linked (GlcNAc...) asparagine glycan is attached at Asn-3682. A glycan (N-linked (GlcNAc...) asparagine) is linked at Asn-3840. 3 consecutive LDL-receptor class A domains span residues 3843 to 3881 (YCPA…HLCF), 3884 to 3923 (PCES…EHCR), and 3929 to 3965 (PCTD…TGCN). Intrachain disulfides connect Cys-3844-Cys-3856, Cys-3851-Cys-3869, Cys-3863-Cys-3880, Cys-3885-Cys-3898, Cys-3893-Cys-3911, Cys-3905-Cys-3922, Cys-3930-Cys-3942, Cys-3937-Cys-3955, and Cys-3949-Cys-3964. 2 N-linked (GlcNAc...) asparagine glycosylation sites follow: Asn-3969 and Asn-3980. In terms of domain architecture, EGF-like 5; calcium-binding spans 4009–4050 (DINECEEFGICPQSCRNSKGSYECFCVDGFKSMSTHYGERCA). Intrachain disulfides connect Cys-4013–Cys-4023, Cys-4019–Cys-4032, and Cys-4034–Cys-4049. Asn-4070 carries N-linked (GlcNAc...) asparagine glycosylation. 3 LDL-receptor class B repeats span residues 4156 to 4198 (RHIY…NPKL), 4199 to 4242 (GLMF…DYLN), and 4244 to 4285 (DRIY…FEDQ). An N-linked (GlcNAc...) asparagine glycan is attached at Asn-4329. Residues 4379-4413 (MPSPCRCMHGGSCYFDENDLPKCKCSSGYSGEYCE) form the EGF-like 6 domain. Intrachain disulfides connect Cys-4383/Cys-4391, Cys-4385/Cys-4401, and Cys-4403/Cys-4412. The chain crosses the membrane as a helical span at residues 4426–4446 (MALLLTFAMVIIVGALVLVGF). The Cytoplasmic segment spans residues 4447-4660 (FHYRKTGSLL…ANLVKEDSDV (214 aa)). An SH3-binding motif is present at residues 4454 to 4463 (SLLPSLPKLP). Positions 4457–4462 (PSLPKL) match the PxLPxI/L motif 1; mediates interaction with ANKRA2 motif. Positions 4460–4465 (PKLPSL) match the PxLPxI/L motif 2; mediates interaction with ANKRA2 motif. Phosphoserine occurs at positions 4464 and 4467. An Endocytosis signal motif is present at residues 4522–4527 (FENPMY). Residues 4558–4660 (QNYGRSIDPS…ANLVKEDSDV (103 aa)) are disordered. Phosphoserine is present on Ser-4577. The interaction with DAB2 stretch occupies residues 4597–4610 (QTTNFENPIYAEMD). Residues 4603-4606 (NPIY) carry the NPXY motif motif. The short motif at 4606 to 4609 (YAEM) is the SH2-binding element. The SH3-binding signature appears at 4619-4630 (VAPPPSPSLPAK). A Phosphoserine modification is found at Ser-4624. Positions 4627-4636 (LPAKASKRSS) are enriched in low complexity. The residue at position 4637 (Thr-4637) is a Phosphothreonine. At Ser-4658 the chain carries Phosphoserine.

The protein belongs to the LDLR family. Binds plasminogen, extracellular matrix components, plasminogen activator-plasminogen activator inhibitor type I complex, apolipoprotein E-enriched beta-VLDL, lipoprotein lipase, lactoferrin, CLU/clusterin and calcium. Forms a multimeric complex together with LRPAP1. Interacts (via PxLPxI/L motif) with ANKRA2 (via ankyrin repeats). Interacts with LRP2BP. Interacts (via NPXY motif) with DAB2; the interaction is not affected by tyrosine phosphorylation of the NPXY motif. Interacts with MB. Interacts with BMP4. Interacts with the Sonic hedgehog protein N-product which is the active product of SHH. Interacts with CST3 in a calcium-dependent manner. Interacts with the vitamin-D binding protein GC/DBP. Interacts with sex hormone-binding protein SHBG. Interacts with angiotensin-2. Also interacts with angiotensin 1-7. Interacts with APOM. Interacts with selenoprotein SEPP1. Interacts with LEP. Interacts with ALB. Interacts with the antiapoptotic protein BIRC5/survivin. Interacts with matrix metalloproteinase MMP2 in complex with metalloproteinase inhibitor TIMP1. In neurons, forms a trimeric complex with APP and APPB1/FE65. Interacts with LDLRAP1/ARH; mediates trafficking of LRP2 to the endocytic recycling compartment. Does not interact with beta-amyloid protein 40 alone but interacts with the complex composed of beta-amyloid protein 40 and CLU/APOJ. Interacts with MDK. A fraction undergoes proteolytic cleavage of the extracellular domain at the cell membrane to generate a cytoplasmic tail fragment. This is internalized into the early endosome from where it trafficks in an LDLRAP1/ARH-dependent manner to the endocytic recycling compartment (ERC). In the ERC, it is further cleaved by gamma-secretase to release a fragment which translocates to the nucleus and mediates transcriptional repression. Post-translationally, N-glycosylation is required for ligand binding. Contains core-fucosylated N-glycans in kidney proximal convoluted tubules (PCTs) and hybrid-type N-glycans in proximal straight tubules (PSTs). Interacts with ligands in a glycoform-dependent manner. Retinol-binding protein and the vitamin D carrier GC/DBP are endocytosed primarily by PCTs, albumin is endocytosed equally by PCTs and PSTs, and the aminoglycoside kanamycin is endocytosed primarily by PSTs. In terms of tissue distribution, in the inner ear, strongly expressed in the marginal cells of the stria vascularis (at protein level). In the female reproductive tract, expressed on the luminal side of the uterine epithelium (at protein level). In the adult brain, expressed in ependymal cells of the lateral ventricles where expression is restricted to the ependyma that faces the stem cell niche (at protein level). Expressed in neurons throughout the brain including in the hippocampus, limbic cortices and cerebellum (at protein level). In the developing optic nerve, expressed exclusively in astrocytes at 14.5 dpc, 16.5 dpc and 18.5 dpc (at protein level).

It localises to the apical cell membrane. The protein localises to the endosome lumen. The protein resides in the membrane. Its subcellular location is the coated pit. It is found in the cell projection. It localises to the dendrite. The protein localises to the axon. In terms of biological role, multiligand endocytic receptor. Acts together with CUBN to mediate endocytosis of high-density lipoproteins. Mediates receptor-mediated uptake of polybasic drugs such as aprotinin, aminoglycosides and polymyxin B. In the kidney, mediates the tubular uptake and clearance of leptin. Also mediates transport of leptin across the blood-brain barrier through endocytosis at the choroid plexus epithelium. Endocytosis of leptin in neuronal cells is required for hypothalamic leptin signaling and leptin-mediated regulation of feeding and body weight. Mediates endocytosis and subsequent lysosomal degradation of CST3 in kidney proximal tubule cells. Mediates renal uptake of 25-hydroxyvitamin D3 in complex with the vitamin D3 transporter GC/DBP. Mediates renal uptake of metallothionein-bound heavy metals. Together with CUBN, mediates renal reabsorption of myoglobin. Mediates renal uptake and subsequent lysosomal degradation of APOM. Plays a role in kidney selenium homeostasis by mediating renal endocytosis of selenoprotein SEPP1. Mediates renal uptake of the antiapoptotic protein BIRC5/survivin which may be important for functional integrity of the kidney. Mediates renal uptake of matrix metalloproteinase MMP2 in complex with metalloproteinase inhibitor TIMP1. Mediates endocytosis of Sonic hedgehog protein N-product (ShhN), the active product of SHH. Also mediates ShhN transcytosis. In the embryonic neuroepithelium, mediates endocytic uptake and degradation of BMP4, is required for correct SHH localization in the ventral neural tube and plays a role in patterning of the ventral telencephalon. Required at the onset of neurulation to sequester SHH on the apical surface of neuroepithelial cells of the rostral diencephalon ventral midline and to control PTCH1-dependent uptake and intracellular trafficking of SHH. During neurulation, required in neuroepithelial cells for uptake of folate bound to the folate receptor FOLR1 which is necessary for neural tube closure. In the adult brain, negatively regulates BMP signaling in the subependymal zone which enables neurogenesis to proceed. In astrocytes, mediates endocytosis of ALB which is required for the synthesis of the neurotrophic factor oleic acid. Involved in neurite branching. During optic nerve development, required for SHH-mediated migration and proliferation of oligodendrocyte precursor cells. Mediates endocytic uptake and clearance of SHH in the retinal margin which protects retinal progenitor cells from mitogenic stimuli and keeps them quiescent. Plays a role in reproductive organ development by mediating uptake in reproductive tissues of androgen and estrogen bound to the sex hormone binding protein SHBG. Mediates endocytosis of angiotensin-2. Also mediates endocytosis of angiotensin 1-7. Binds to the complex composed of beta-amyloid protein 40 and CLU/APOJ and mediates its endocytosis and lysosomal degradation. Required for embryonic heart development. Required for normal hearing, possibly through interaction with estrogen in the inner ear. In Mus musculus (Mouse), this protein is Low-density lipoprotein receptor-related protein 2 (Lrp2).